Consider the following 559-residue polypeptide: Dihydroxy-acid dehydratase (559 aa).

Residue C49 coordinates [2Fe-2S] cluster. D81 is a binding site for Mg(2+). C122 is a binding site for [2Fe-2S] cluster. Mg(2+) contacts are provided by D123 and K124. Residue K124 is modified to N6-carboxylysine. C194 is a [2Fe-2S] cluster binding site. E446 is a Mg(2+) binding site. Residue S472 is the Proton acceptor of the active site.

The protein belongs to the IlvD/Edd family. Homodimer. [2Fe-2S] cluster is required as a cofactor. Mg(2+) serves as cofactor.

The enzyme catalyses (2R)-2,3-dihydroxy-3-methylbutanoate = 3-methyl-2-oxobutanoate + H2O. The catalysed reaction is (2R,3R)-2,3-dihydroxy-3-methylpentanoate = (S)-3-methyl-2-oxopentanoate + H2O. The protein operates within amino-acid biosynthesis; L-isoleucine biosynthesis; L-isoleucine from 2-oxobutanoate: step 3/4. It participates in amino-acid biosynthesis; L-valine biosynthesis; L-valine from pyruvate: step 3/4. Its function is as follows. Functions in the biosynthesis of branched-chain amino acids. Catalyzes the dehydration of (2R,3R)-2,3-dihydroxy-3-methylpentanoate (2,3-dihydroxy-3-methylvalerate) into 2-oxo-3-methylpentanoate (2-oxo-3-methylvalerate) and of (2R)-2,3-dihydroxy-3-methylbutanoate (2,3-dihydroxyisovalerate) into 2-oxo-3-methylbutanoate (2-oxoisovalerate), the penultimate precursor to L-isoleucine and L-valine, respectively. The sequence is that of Dihydroxy-acid dehydratase from Prochlorococcus marinus (strain MIT 9515).